The following is a 453-amino-acid chain: GTPase Der (453 aa).

EngA-type G domains are found at residues 3 to 167 and 187 to 360; these read PIIV…ISEK and IKVA…EDSK. GTP contacts are provided by residues 9–16, 57–61, 119–122, 193–200, 240–244, and 305–308; these read GRTNVGKS, DTAGL, NKID, GRPNVGKS, DTAGA, and NKCD. Positions 361–445 constitute a KH-like domain; that stretch reads RKISTSTLIK…PIQIQFKDNE (85 aa).

Belongs to the TRAFAC class TrmE-Era-EngA-EngB-Septin-like GTPase superfamily. EngA (Der) GTPase family. As to quaternary structure, associates with the 50S ribosomal subunit.

Its function is as follows. GTPase that plays an essential role in the late steps of ribosome biogenesis. This Buchnera aphidicola subsp. Acyrthosiphon pisum (strain 5A) protein is GTPase Der.